A 488-amino-acid chain; its full sequence is GTPase Der (488 aa).

2 EngA-type G domains span residues 3–166 and 199–372; these read PVVA…AEAM and IKLA…DSAT. GTP is bound by residues 9 to 16, 56 to 60, 118 to 121, 205 to 212, 252 to 256, and 317 to 320; these read GRPNVGKS, DTGGI, NKVD, GKPNVGKS, DTAGV, and NKWD. A KH-like domain is found at 373-457; that stretch reads RRVSTSMLTR…PIQLRFQEGD (85 aa). Positions 460 to 488 are disordered; that stretch reads FENKTEKLTMSQERRRKRAQSHIKDRKTK. The span at 473 to 488 shows a compositional bias: basic residues; the sequence is RRRKRAQSHIKDRKTK.

This sequence belongs to the TRAFAC class TrmE-Era-EngA-EngB-Septin-like GTPase superfamily. EngA (Der) GTPase family. As to quaternary structure, associates with the 50S ribosomal subunit.

GTPase that plays an essential role in the late steps of ribosome biogenesis. The sequence is that of GTPase Der from Shewanella baltica (strain OS155 / ATCC BAA-1091).